The chain runs to 289 residues: Phospholipase A1 (289 aa).

Residues 1 to 20 (MRTLQGWLLPVFMLPMAVYA) form the signal peptide. Residues 21 to 52 (QEATVKEVHDAPAVRGSIIANMLQEHDNPFTL) are Periplasmic-facing. The chain crosses the membrane as a beta stranded span at residues 53–65 (YPYDTNYLIYTQT). Residues 66-84 (SDLNKEAIASYDWAENARK) lie on the Extracellular side of the membrane. The beta stranded transmembrane segment at 85-99 (DEVKFQLSLAFPLWR) threads the bilayer. The Periplasmic segment spans residues 100–105 (GILGPN). A beta stranded membrane pass occupies residues 106–118 (SVLGASYTQKSWW). The Extracellular segment spans residues 119 to 128 (QLSNSEESSP). Residue serine 126 coordinates Ca(2+). The beta stranded transmembrane segment at 129–148 (FRETNYEPQLFLGFATDYRF) threads the bilayer. Residues 149–150 (AG) are Periplasmic-facing. Residues 151–164 (WTLRDVEMGYNHDS) form a beta stranded membrane-spanning segment. The active-site Proton acceptor is histidine 162. The active-site Nucleophile is serine 164. The Extracellular segment spans residues 165-173 (NGRSDPTSR). Ca(2+) is bound by residues arginine 167 and serine 172. The chain crosses the membrane as a beta stranded span at residues 174–186 (SWNRLYTRLMAEN). Topologically, residues 187 to 188 (GN) are periplasmic. The chain crosses the membrane as a beta stranded span at residues 189–198 (WLVEVKPWYV). Residues 199 to 216 (VGNTDDNPDITKYMGYYQ) are Extracellular-facing. Aspartate 204 contributes to the Ca(2+) binding site. The beta stranded transmembrane segment at 217 to 223 (LKIGYHL) threads the bilayer. Residues 224–225 (GD) are Periplasmic-facing. A beta stranded membrane pass occupies residues 226-234 (AVLSAKGQY). The Extracellular segment spans residues 235 to 241 (NWNTGYG). The chain crosses the membrane as a beta stranded span at residues 242–250 (GAELGLSYP). The Periplasmic segment spans residues 251–255 (ITKHV). Residues 256–265 (RLYTQVYSGY) traverse the membrane as a beta stranded segment. Residues 266 to 274 (GESLIDYNF) lie on the Extracellular side of the membrane. The beta stranded transmembrane segment at 275 to 286 (NQTRVGVGVMLN) threads the bilayer. Residues 287–289 (DLF) are Periplasmic-facing.

It belongs to the phospholipase A1 family. In terms of assembly, homodimer; dimerization is reversible, and the dimeric form is the active one. Ca(2+) is required as a cofactor.

It localises to the cell outer membrane. The catalysed reaction is a 1,2-diacyl-sn-glycero-3-phosphocholine + H2O = a 2-acyl-sn-glycero-3-phosphocholine + a fatty acid + H(+). It catalyses the reaction a 1,2-diacyl-sn-glycero-3-phosphocholine + H2O = a 1-acyl-sn-glycero-3-phosphocholine + a fatty acid + H(+). In terms of biological role, hydrolysis of phosphatidylcholine with phospholipase A2 (EC 3.1.1.4) and phospholipase A1 (EC 3.1.1.32) activities. In Escherichia coli O157:H7, this protein is Phospholipase A1 (pldA).